The sequence spans 210 residues: GRF1-interacting factor 1 (210 aa).

The segment covering 135-152 (ATLQHQQLHHSQLGMSSS) has biased composition (low complexity). The disordered stretch occupies residues 135–210 (ATLQHQQLHH…LYLKSSDDGN (76 aa)). Residues 182 to 198 (GSGGGGEGRGGSSGDGG) show a composition bias toward gly residues.

It belongs to the SS18 family. As to quaternary structure, interacts with GRF1, GRF2, GRF5 and GRF9. Strongly expressed in actively growing and developing tissues, such as roots, upper stems, and shoot tips and flower buds. Also expressed in mature flowers. Not expressed in the shoot apical meristem (SAM). Highly accumulated in the proximal part of leaf primordia, in the key proliferative zone at the junction region between the leaf blade and leaf petiole.

Transcription coactivator that plays a role in the regulation of cell expansion in leaf and cotyledons tissues. Component of a network formed by miR396, the GRFs and their interacting factors (GIFs) acting in the regulation of meristem function, at least partially through the control of cell proliferation. Appears to function synergistically with GRF1 as a transcriptional coactivator. Acts together with GRF5 for the development of appropriate leaf size and shape through the promotion and/or maintenance of cell proliferation activity in leaf primordia. Plays a role in adaxial/abaxial patterning and growth in leaf morphogenesis. GIFs are involved in the positive regulation of cell proliferation of lateral organs in a functionally redundant manner. Together with GATA18/HAN, mediates cotyledon identity by preventing ectopic root formation through the repression of PLT1 expression. This chain is GRF1-interacting factor 1, found in Arabidopsis thaliana (Mouse-ear cress).